The following is a 94-amino-acid chain: Defensin-7 (94 aa).

Positions 1–19 are cleaved as a signal peptide; the sequence is MRTLTLLSAFLLVALQAWA. 2 disulfides stabilise this stretch: cysteine 65-cysteine 93 and cysteine 72-cysteine 92.

This sequence belongs to the alpha-defensin family.

Its subcellular location is the secreted. Its function is as follows. Has antimicrobial activity. The protein is Defensin-7 (DEFA7) of Pan troglodytes (Chimpanzee).